The chain runs to 246 residues: Proteasome subunit alpha type-6 (246 aa).

Belongs to the peptidase T1A family. As to quaternary structure, the 26S proteasome consists of a 20S proteasome core and two 19S regulatory subunits. The 20S proteasome core is composed of 28 subunits that are arranged in four stacked rings, resulting in a barrel-shaped structure. The two end rings are each formed by seven alpha subunits, and the two central rings are each formed by seven beta subunits. The catalytic chamber with the active sites is on the inside of the barrel.

It localises to the cytoplasm. The protein localises to the nucleus. Its function is as follows. The proteasome is a multicatalytic proteinase complex which is characterized by its ability to cleave peptides with Arg, Phe, Tyr, Leu, and Glu adjacent to the leaving group at neutral or slightly basic pH. The proteasome has an ATP-dependent proteolytic activity. This Nicotiana tabacum (Common tobacco) protein is Proteasome subunit alpha type-6 (PAA1).